The following is a 157-amino-acid chain: 2-C-methyl-D-erythritol 2,4-cyclodiphosphate synthase (157 aa).

A divalent metal cation is bound by residues D9 and H11. 4-CDP-2-C-methyl-D-erythritol 2-phosphate is bound by residues 9–11 (DVH) and 35–36 (HS). H43 contacts a divalent metal cation. 4-CDP-2-C-methyl-D-erythritol 2-phosphate is bound by residues 57–59 (DIG), F140, and R143.

This sequence belongs to the IspF family. In terms of assembly, homotrimer. A divalent metal cation serves as cofactor.

It catalyses the reaction 4-CDP-2-C-methyl-D-erythritol 2-phosphate = 2-C-methyl-D-erythritol 2,4-cyclic diphosphate + CMP. Its pathway is isoprenoid biosynthesis; isopentenyl diphosphate biosynthesis via DXP pathway; isopentenyl diphosphate from 1-deoxy-D-xylulose 5-phosphate: step 4/6. Its function is as follows. Involved in the biosynthesis of isopentenyl diphosphate (IPP) and dimethylallyl diphosphate (DMAPP), two major building blocks of isoprenoid compounds. Catalyzes the conversion of 4-diphosphocytidyl-2-C-methyl-D-erythritol 2-phosphate (CDP-ME2P) to 2-C-methyl-D-erythritol 2,4-cyclodiphosphate (ME-CPP) with a corresponding release of cytidine 5-monophosphate (CMP). This chain is 2-C-methyl-D-erythritol 2,4-cyclodiphosphate synthase, found in Caldicellulosiruptor bescii (strain ATCC BAA-1888 / DSM 6725 / KCTC 15123 / Z-1320) (Anaerocellum thermophilum).